The sequence spans 807 residues: Oxysterol-binding protein 1 (807 aa).

Ala-2 carries the post-translational modification N-acetylalanine. Residues 61 to 86 (GAGGVAAAGPAPAPPTGGSGGSGAGG) form a disordered region. The segment covering 77-86 (GGSGGSGAGG) has biased composition (gly residues). Residues 88-181 (GSAREGWLFK…WVTALELAKA (94 aa)) form the PH domain. 117 to 122 (LSYYRS) serves as a coordination point for a 1,2-diacyl-sn-glycero-3-phospho-(1D-myo-inositol 4-phosphate). A phosphoserine mark is found at Ser-190, Ser-193, Ser-198, Ser-238, and Ser-240. Positions 291–326 (QKSLQYERDQRIRLEETLEQLAKQHNHLERAFRGAT) form a coiled coil. Gln-314 contacts 20-hydroxycholesterol. Gln-314 contributes to the 25-hydroxycholesterol binding site. 7beta-hydroxycholesterol is bound at residue Gln-314. Gln-314 lines the cholesterol pocket. Gln-314 lines the ergosterol pocket. A disordered region spans residues 329-353 (PANTPGNVGSGKDQCCSGKGDMSDE). Residues Ser-338, Ser-345, and Ser-351 each carry the phosphoserine modification. An FFAT motif is present at residues 358 to 364 (EFFDAPE). Position 377 is a phosphothreonine (Thr-377). A phosphoserine mark is found at Ser-379, Ser-382, Ser-385, Ser-386, and Ser-389. A 1,2-diacyl-sn-glycero-3-phospho-(1D-myo-inositol 4-phosphate) is bound by residues 493–496 (KPFN) and 522–523 (HH). The disordered stretch occupies residues 710-759 (TAPTDSRLRPDQRLMENGRWDEANAEKQRLEEKQRLSRKKREAEAMKATE). Basic and acidic residues predominate over residues 715–759 (SRLRPDQRLMENGRWDEANAEKQRLEEKQRLSRKKREAEAMKATE). Residues 730–760 (DEANAEKQRLEEKQRLSRKKREAEAMKATED) adopt a coiled-coil conformation.

The protein belongs to the OSBP family. Homodimer or homotrimer. Interacts (via FFAT motif) with VAPA. Interacts (via C-terminus) with RELCH (via the third HEAT repeat). Found in a complex composed of RELCH, OSBP1 and RAB11A. In terms of tissue distribution, widely expressed.

The protein localises to the cytoplasm. It localises to the cytosol. It is found in the perinuclear region. The protein resides in the golgi apparatus membrane. Its subcellular location is the endoplasmic reticulum membrane. The protein localises to the golgi apparatus. It localises to the trans-Golgi network. In terms of biological role, lipid transporter involved in lipid countertransport between the Golgi complex and membranes of the endoplasmic reticulum: specifically exchanges sterol with phosphatidylinositol 4-phosphate (PI4P), delivering sterol to the Golgi in exchange for PI4P, which is degraded by the SAC1/SACM1L phosphatase in the endoplasmic reticulum. Binds cholesterol and a range of oxysterols including 25-hydroxycholesterol. Cholesterol binding promotes the formation of a complex with PP2A and a tyrosine phosphatase which dephosphorylates ERK1/2, whereas 25-hydroxycholesterol causes its disassembly. Regulates cholesterol efflux by decreasing ABCA1 stability. The sequence is that of Oxysterol-binding protein 1 from Homo sapiens (Human).